The following is a 90-amino-acid chain: Putative membrane protein insertion efficiency factor (90 aa).

Belongs to the UPF0161 family.

Its subcellular location is the cell inner membrane. Functionally, could be involved in insertion of integral membrane proteins into the membrane. The sequence is that of Putative membrane protein insertion efficiency factor from Bordetella bronchiseptica (strain ATCC BAA-588 / NCTC 13252 / RB50) (Alcaligenes bronchisepticus).